Reading from the N-terminus, the 307-residue chain is Vesicle-trafficking protein SEC22a (307 aa).

The residue at position 2 (Ser2) is an N-acetylserine. Residues 2-187 (SMILSASVIR…ISSAHQRLEP (186 aa)) are Cytoplasmic-facing. Phosphoserine occurs at positions 6 and 8. The region spanning 8–119 (SVIRVRDGLP…YCFIEFDNFI (112 aa)) is the Longin domain. The chain crosses the membrane as a helical span at residues 188 to 208 (ATLSGIVGFILSLLCGALNLI). Over 209–226 (RGFHAIESLLQSDGDDFN) the chain is Lumenal. Residues 227–247 (YIIAFFLGTAACLYQCYLLVY) traverse the membrane as a helical segment. The Cytoplasmic segment spans residues 248–253 (YTGWRN). A helical transmembrane segment spans residues 254-271 (VKSFLTFGLICLCNMYLY). The Lumenal portion of the chain corresponds to 272-274 (ELR). Residues 275–295 (NLWQLFFHVTVGAFVTLQIWL) form a helical membrane-spanning segment. The Cytoplasmic portion of the chain corresponds to 296 to 307 (RQAQGKAPDYDV).

It belongs to the synaptobrevin family.

It is found in the endoplasmic reticulum membrane. May be involved in vesicle transport between the ER and the Golgi complex. This chain is Vesicle-trafficking protein SEC22a (SEC22A), found in Macaca fascicularis (Crab-eating macaque).